Here is a 468-residue protein sequence, read N- to C-terminus: Pituitary adenylate cyclase-activating polypeptide type I receptor (468 aa).

The N-terminal stretch at 1 to 20 (MAGVVHVSLAALLLLPMAPA) is a signal peptide. Residues 21–152 (MHSDCIFKKE…TGDQDYYYLS (132 aa)) are Extracellular-facing. Cystine bridges form between C34-C63, C54-C118, and C77-C134. Residues N48, N60, and N117 are each glycosylated (N-linked (GlcNAc...) asparagine). The segment at 125–139 (EPFPHYFDACGFDEY) is important for ADCYAP1/PACAP ligand binding and specificity. Residues 153–177 (VKALYTVGYSTSLVTLTTAMVILCR) traverse the membrane as a helical segment. At 178–187 (FRKLHCTRNF) the chain is on the cytoplasmic side. The helical transmembrane segment at 188–208 (IHMNLFVSFMLRAISVFIKDW) threads the bilayer. Residues 209–223 (ILYAEQDSNHCFIST) are Extracellular-facing. A helical transmembrane segment spans residues 224–249 (VECKAVMVFFHYCVVSNYFWLFIEGL). C226 and C296 are joined by a disulfide. Residues 250–267 (YLFTLLVETFFPERRYFY) lie on the Cytoplasmic side of the membrane. Residues 268-290 (WYTIIGWGTPTVCVTVWATLRLY) form a helical membrane-spanning segment. The Extracellular portion of the chain corresponds to 291 to 302 (FDDTGCWDMNDS). A glycan (N-linked (GlcNAc...) asparagine) is linked at N300. Residues 303–329 (TALWWVIKGPVVGSIMVNFVLFIGIIV) form a helical membrane-spanning segment. At 330 to 347 (ILVQKLQSPDMGGNESSI) the chain is on the cytoplasmic side. Residues 348–374 (YLRLARSTLLLIPLFGIHYTVFAFSPE) traverse the membrane as a helical segment. An N-linked (GlcNAc...) asparagine glycan is attached at N375. Over 375–379 (NVSKR) the chain is Extracellular. A helical membrane pass occupies residues 380-403 (ERLVFELGLGSFQGFVVAVLYCFL). At 404 to 468 (NGEVQAEIKR…SGLPADNLAT (65 aa)) the chain is on the cytoplasmic side. Phosphoserine is present on residues S434 and S447.

This sequence belongs to the G-protein coupled receptor 2 family. In terms of assembly, interacts with maxadilan, a vasodilator peptide from Lutzomyia longipalpis saliva; the interaction results in ADCYAP1R1 activation. Most abundant in the brain, low expression in the lung, liver, thymus, spleen, pancreas and placenta.

The protein resides in the cell membrane. With respect to regulation, several synthetic peptides derived from maxadilan, a vasodilator peptide from Lutzomyia longipalpis saliva, act as antagonists for ADCYAP1R1. Its function is as follows. G protein-coupled receptor activated by the neuropeptide pituitary adenylate cyclase-activating polypeptide (ADCYAP1/PACAP). Binds both PACAP27 and PACAP38 bioactive peptides. Ligand binding causes a conformation change that triggers signaling via guanine nucleotide-binding proteins (G proteins) and modulates the activity of downstream effectors. Activates cAMP-dependent pathway. May regulate the release of adrenocorticotropin, luteinizing hormone, growth hormone, prolactin, epinephrine, and catecholamine. May play a role in spermatogenesis and sperm motility. Causes smooth muscle relaxation and secretion in the gastrointestinal tract. This is Pituitary adenylate cyclase-activating polypeptide type I receptor from Homo sapiens (Human).